We begin with the raw amino-acid sequence, 288 residues long: Structure-specific endonuclease subunit SLX1 (288 aa).

In terms of domain architecture, GIY-YIG spans 10–93 (DFYCSYLLRS…QHSYKTRFIE (84 aa)). The SLX1-type zinc finger occupies 209-265 (CMICDKKIDYIHDEGTQMVGFCSDDECDFLSCLSCLYKEFTKNSKQIIPKSGHCPNC).

The protein belongs to the SLX1 family. As to quaternary structure, forms a heterodimer with SLX4. It depends on a divalent metal cation as a cofactor.

Its subcellular location is the nucleus. Functionally, catalytic subunit of the SLX1-SLX4 structure-specific endonuclease that resolves DNA secondary structures generated during DNA repair and recombination. Has endonuclease activity towards branched DNA substrates, introducing single-strand cuts in duplex DNA close to junctions with ss-DNA. This Kluyveromyces lactis (strain ATCC 8585 / CBS 2359 / DSM 70799 / NBRC 1267 / NRRL Y-1140 / WM37) (Yeast) protein is Structure-specific endonuclease subunit SLX1.